A 303-amino-acid polypeptide reads, in one-letter code: ATP phosphoribosyltransferase (303 aa).

This sequence belongs to the ATP phosphoribosyltransferase family. Long subfamily. Mg(2+) is required as a cofactor.

Its subcellular location is the cytoplasm. It carries out the reaction 1-(5-phospho-beta-D-ribosyl)-ATP + diphosphate = 5-phospho-alpha-D-ribose 1-diphosphate + ATP. It participates in amino-acid biosynthesis; L-histidine biosynthesis; L-histidine from 5-phospho-alpha-D-ribose 1-diphosphate: step 1/9. Feedback inhibited by histidine. Its function is as follows. Catalyzes the condensation of ATP and 5-phosphoribose 1-diphosphate to form N'-(5'-phosphoribosyl)-ATP (PR-ATP). Has a crucial role in the pathway because the rate of histidine biosynthesis seems to be controlled primarily by regulation of HisG enzymatic activity. The chain is ATP phosphoribosyltransferase from Haemophilus influenzae (strain PittGG).